The sequence spans 568 residues: 2-succinyl-5-enolpyruvyl-6-hydroxy-3-cyclohexene-1-carboxylate synthase (568 aa).

The protein belongs to the TPP enzyme family. MenD subfamily. In terms of assembly, homodimer. It depends on Mg(2+) as a cofactor. Mn(2+) is required as a cofactor. Requires thiamine diphosphate as cofactor.

The enzyme catalyses isochorismate + 2-oxoglutarate + H(+) = 5-enolpyruvoyl-6-hydroxy-2-succinyl-cyclohex-3-ene-1-carboxylate + CO2. The protein operates within quinol/quinone metabolism; 1,4-dihydroxy-2-naphthoate biosynthesis; 1,4-dihydroxy-2-naphthoate from chorismate: step 2/7. It functions in the pathway quinol/quinone metabolism; menaquinone biosynthesis. Catalyzes the thiamine diphosphate-dependent decarboxylation of 2-oxoglutarate and the subsequent addition of the resulting succinic semialdehyde-thiamine pyrophosphate anion to isochorismate to yield 2-succinyl-5-enolpyruvyl-6-hydroxy-3-cyclohexene-1-carboxylate (SEPHCHC). This chain is 2-succinyl-5-enolpyruvyl-6-hydroxy-3-cyclohexene-1-carboxylate synthase, found in Actinobacillus succinogenes (strain ATCC 55618 / DSM 22257 / CCUG 43843 / 130Z).